A 109-amino-acid chain; its full sequence is uncharacterized protein (109 aa).

Positions 42 to 100 constitute an HTH cro/C1-type domain; that stretch reads LEEKLKQEKIDRKYLAEVTNIPYTTVSRIMRAEANREFNPEIDTILKIAKYFNCTMDEV. A DNA-binding region (H-T-H motif) is located at residues 53–72; it reads RKYLAEVTNIPYTTVSRIMR.

This is an uncharacterized protein from Rickettsia conorii (strain ATCC VR-613 / Malish 7).